Here is a 412-residue protein sequence, read N- to C-terminus: 1-deoxy-D-xylulose 5-phosphate reductoisomerase (412 aa).

The NADPH site is built by T5, G6, S7, I8, G31, N33, and N125. K126 lines the 1-deoxy-D-xylulose 5-phosphate pocket. E127 contributes to the NADPH binding site. D151 provides a ligand contact to Mn(2+). The 1-deoxy-D-xylulose 5-phosphate site is built by S152, E153, S189, and H212. Residue E153 coordinates Mn(2+). G218 is a binding site for NADPH. Residues S225, N230, K231, and E234 each coordinate 1-deoxy-D-xylulose 5-phosphate. E234 provides a ligand contact to Mn(2+).

Belongs to the DXR family. The cofactor is Mg(2+). Requires Mn(2+) as cofactor.

The catalysed reaction is 2-C-methyl-D-erythritol 4-phosphate + NADP(+) = 1-deoxy-D-xylulose 5-phosphate + NADPH + H(+). The protein operates within isoprenoid biosynthesis; isopentenyl diphosphate biosynthesis via DXP pathway; isopentenyl diphosphate from 1-deoxy-D-xylulose 5-phosphate: step 1/6. Functionally, catalyzes the NADPH-dependent rearrangement and reduction of 1-deoxy-D-xylulose-5-phosphate (DXP) to 2-C-methyl-D-erythritol 4-phosphate (MEP). In Prochlorococcus marinus (strain MIT 9313), this protein is 1-deoxy-D-xylulose 5-phosphate reductoisomerase.